We begin with the raw amino-acid sequence, 147 residues long: Probable cytidine deaminase (147 aa).

The 127-residue stretch at 4–130 (EELEKCIDAA…KLLPGLFSQE (127 aa)) folds into the CMP/dCMP-type deaminase domain. 45-51 (NVENSSY) contributes to the substrate binding site. Cys-56 contributes to the Zn(2+) binding site. Catalysis depends on Glu-58, which acts as the Proton donor. The Zn(2+) site is built by Cys-90 and Cys-93.

It belongs to the cytidine and deoxycytidylate deaminase family. Zn(2+) serves as cofactor.

The enzyme catalyses cytidine + H2O + H(+) = uridine + NH4(+). The catalysed reaction is 2'-deoxycytidine + H2O + H(+) = 2'-deoxyuridine + NH4(+). Functionally, this enzyme scavenges exogenous and endogenous cytidine and 2'-deoxycytidine for UMP synthesis. This Dictyostelium discoideum (Social amoeba) protein is Probable cytidine deaminase (cda).